Consider the following 198-residue polypeptide: 3-isopropylmalate dehydratase small subunit (198 aa).

This sequence belongs to the LeuD family. LeuD type 1 subfamily. As to quaternary structure, heterodimer of LeuC and LeuD.

The catalysed reaction is (2R,3S)-3-isopropylmalate = (2S)-2-isopropylmalate. Its pathway is amino-acid biosynthesis; L-leucine biosynthesis; L-leucine from 3-methyl-2-oxobutanoate: step 2/4. Its function is as follows. Catalyzes the isomerization between 2-isopropylmalate and 3-isopropylmalate, via the formation of 2-isopropylmaleate. In Mycobacterium bovis (strain ATCC BAA-935 / AF2122/97), this protein is 3-isopropylmalate dehydratase small subunit (leuD).